Here is a 446-residue protein sequence, read N- to C-terminus: Nitrate/nitrite binding protein NrtA (446 aa).

The signal sequence occupies residues 1-28 (MSNFSRSTRRKFMFTAGAAAIGGVVLHG). Cys-29 carries N-palmitoyl cysteine lipidation. A lipid anchor (S-diacylglycerol cysteine) is attached at Cys-29. Nitrate contacts are provided by Trp-102, Gln-155, His-196, Gly-240, and Lys-269.

Belongs to the CmpA/NrtA family. In terms of assembly, the complex is composed of two ATP-binding proteins (NrtC and NrtD), two transmembrane proteins (NrtB) and a solute-binding protein (NrtA).

The protein localises to the cell inner membrane. Functionally, part of the ABC transporter complex NrtABCD involved in nitrate uptake. The complex is probably also involved in nitrite transport. NrtA is the substrate-binding protein. Binds nitrate. In Synechocystis sp. (strain ATCC 27184 / PCC 6803 / Kazusa), this protein is Nitrate/nitrite binding protein NrtA.